A 111-amino-acid chain; its full sequence is Kalata-B7 (111 aa).

An N-terminal signal peptide occupies residues 1-28 (MAKFTNCLALCLLLAAVVGAFGVELSEA). Residues 29 to 75 (DKSAVVNEIAEKMALQEMLDGVDKLFLRKMKSSETTLTMFLKEMQLK) constitute a propeptide that is removed on maturation. Residues 76 to 104 (GLPVCGETCTLGTCYTQGCTCSWPICKRN) constitute a cross-link (cyclopeptide (Gly-Asn)). 3 cysteine pairs are disulfide-bonded: C80–C94, C84–C96, and C89–C101. A propeptide spanning residues 105–111 (GLPDVAA) is cleaved from the precursor.

In terms of processing, kalata-B7 is a cyclic peptide.

Its function is as follows. Probably participates in a plant defense mechanism. Has hemolytic activity. The chain is Kalata-B7 (OAK3) from Oldenlandia affinis.